The following is a 507-amino-acid chain: ATP synthase subunit alpha (507 aa).

171 to 178 (GDRQTGKT) serves as a coordination point for ATP.

This sequence belongs to the ATPase alpha/beta chains family. In terms of assembly, F-type ATPases have 2 components, CF(1) - the catalytic core - and CF(0) - the membrane proton channel. CF(1) has five subunits: alpha(3), beta(3), gamma(1), delta(1), epsilon(1). CF(0) has three main subunits: a(1), b(2) and c(9-12). The alpha and beta chains form an alternating ring which encloses part of the gamma chain. CF(1) is attached to CF(0) by a central stalk formed by the gamma and epsilon chains, while a peripheral stalk is formed by the delta and b chains.

It is found in the cell inner membrane. The enzyme catalyses ATP + H2O + 4 H(+)(in) = ADP + phosphate + 5 H(+)(out). Functionally, produces ATP from ADP in the presence of a proton gradient across the membrane. The alpha chain is a regulatory subunit. The polypeptide is ATP synthase subunit alpha (Bdellovibrio bacteriovorus (strain ATCC 15356 / DSM 50701 / NCIMB 9529 / HD100)).